A 151-amino-acid chain; its full sequence is uncharacterized protein (151 aa).

The interval 48–151 is disordered; that stretch reads RPPGWQPPVN…SKFDHTRKKF (104 aa). The span at 55–77 shows a compositional bias: polar residues; that stretch reads PVNTGPTSPVSINASNAAPSNLK. Composition is skewed to low complexity over residues 85–105 and 123–141; these read PRRL…RLPS and KSPS…SLLR.

This is an uncharacterized protein from Schizosaccharomyces pombe (strain 972 / ATCC 24843) (Fission yeast).